Here is a 259-residue protein sequence, read N- to C-terminus: Bis(5'-nucleosyl)-tetraphosphatase, symmetrical (259 aa).

The protein belongs to the Ap4A hydrolase family.

The enzyme catalyses P(1),P(4)-bis(5'-adenosyl) tetraphosphate + H2O = 2 ADP + 2 H(+). Functionally, hydrolyzes diadenosine 5',5'''-P1,P4-tetraphosphate to yield ADP. In Klebsiella aerogenes (Enterobacter aerogenes), this protein is Bis(5'-nucleosyl)-tetraphosphatase, symmetrical (apaH).